The sequence spans 366 residues: Chorismate synthase (366 aa).

Arg48 and Arg54 together coordinate NADP(+). Residues 125 to 127 (RSS), 241 to 242 (NA), Gly285, 300 to 304 (KPTSS), and Arg326 contribute to the FMN site.

Belongs to the chorismate synthase family. Homotetramer. The cofactor is FMNH2.

The enzyme catalyses 5-O-(1-carboxyvinyl)-3-phosphoshikimate = chorismate + phosphate. It functions in the pathway metabolic intermediate biosynthesis; chorismate biosynthesis; chorismate from D-erythrose 4-phosphate and phosphoenolpyruvate: step 7/7. Functionally, catalyzes the anti-1,4-elimination of the C-3 phosphate and the C-6 proR hydrogen from 5-enolpyruvylshikimate-3-phosphate (EPSP) to yield chorismate, which is the branch point compound that serves as the starting substrate for the three terminal pathways of aromatic amino acid biosynthesis. This reaction introduces a second double bond into the aromatic ring system. The protein is Chorismate synthase of Cereibacter sphaeroides (strain ATCC 17023 / DSM 158 / JCM 6121 / CCUG 31486 / LMG 2827 / NBRC 12203 / NCIMB 8253 / ATH 2.4.1.) (Rhodobacter sphaeroides).